The following is a 484-amino-acid chain: MAVLLRKVWGSVLARAAAGAAPPEAFAAAASPRRPQAAGEYGSLGALDVLPIDVLAQILRLLGPADAARSTAVCRAWRLLASDNGLWAFFLRLGPDPWELVVFAETHLGAGPALHPGLYYDSSPQLSFKHVYTRRAVVPGSIIVDGGSGYCKYGWSKYAAPSGRCATFLEFGNIESPMYARLRHFLSTIYTRMQVKPSTQPIIVVLPLCHSDDTESARASRKQYRDTLYSVLFDMNVPAVCSVDQAVLALYAAKRTSGIVVNIGFNATSIVPIFQGRVMHEIGVETVGQGALKLTGFLKELMQQRNITFESLYTVRTIKEKLCYVAADYEAEKRKDTQASCEVDGEGWFTLSEERFKTAEILFQPQIGGVRAMGLHKAVSLCMDHCYNSEVFGDDNWYKTVVLSGGSSCLPGLSERLEKELRELLPAHISEGIRVIPPPFGTDSAWFGAKMISNVSTFTEAWCIKKKQFRQKTRRNGPSFVNVW.

In terms of domain architecture, F-box spans 44–90 (LGALDVLPIDVLAQILRLLGPADAARSTAVCRAWRLLASDNGLWAFF). Position 262–265 (262–265 (NIGF)) interacts with ATP.

Belongs to the actin family. Plant ARP8 subfamily.

The protein localises to the nucleus. The protein resides in the nucleolus. It is found in the cytoplasm. In Oryza sativa subsp. indica (Rice), this protein is Actin-related protein 8 (ARP8).